Reading from the N-terminus, the 111-residue chain is Small ribosomal subunit protein mS38 (111 aa).

The segment covering 82–99 has biased composition (basic residues); the sequence is RKRKKKMKKHKLRKRRKR. A disordered region spans residues 82–111; it reads RKRKKKMKKHKLRKRRKREKAERRKLSQGR. Over residues 100–111 the composition is skewed to basic and acidic residues; it reads EKAERRKLSQGR.

This sequence belongs to the mitochondrion-specific ribosomal protein mS38 family. In terms of assembly, component of the mitochondrial small ribosomal subunit (mt-SSU). Mature yeast 74S mitochondrial ribosomes consist of a small (37S) and a large (54S) subunit. The 37S small subunit contains a 15S ribosomal RNA (15S mt-rRNA) and 34 different proteins. The 54S large subunit contains a 21S rRNA (21S mt-rRNA) and 46 different proteins.

The protein resides in the mitochondrion. Its subcellular location is the mitochondrion inner membrane. Component of the mitochondrial ribosome (mitoribosome), a dedicated translation machinery responsible for the synthesis of mitochondrial genome-encoded proteins, including at least some of the essential transmembrane subunits of the mitochondrial respiratory chain. The mitoribosomes are attached to the mitochondrial inner membrane and translation products are cotranslationally integrated into the membrane. mS38 is also involved in the splicing of the COX1 mRNA. This is Small ribosomal subunit protein mS38 (QRI5) from Saccharomyces cerevisiae (strain ATCC 204508 / S288c) (Baker's yeast).